Consider the following 114-residue polypeptide: Large ribosomal subunit protein uL18 (114 aa).

It belongs to the universal ribosomal protein uL18 family. As to quaternary structure, part of the 50S ribosomal subunit; part of the 5S rRNA/L5/L18/L25 subcomplex. Contacts the 5S and 23S rRNAs.

Functionally, this is one of the proteins that bind and probably mediate the attachment of the 5S RNA into the large ribosomal subunit, where it forms part of the central protuberance. In Bacteroides thetaiotaomicron (strain ATCC 29148 / DSM 2079 / JCM 5827 / CCUG 10774 / NCTC 10582 / VPI-5482 / E50), this protein is Large ribosomal subunit protein uL18.